A 115-amino-acid chain; its full sequence is Large ribosomal subunit protein bL19 (115 aa).

Belongs to the bacterial ribosomal protein bL19 family.

In terms of biological role, this protein is located at the 30S-50S ribosomal subunit interface and may play a role in the structure and function of the aminoacyl-tRNA binding site. In Streptococcus pyogenes serotype M49 (strain NZ131), this protein is Large ribosomal subunit protein bL19.